Consider the following 419-residue polypeptide: Carboxypeptidase A1 (419 aa).

The N-terminal stretch at 1-16 (MKRLLILSLLLEAVCG) is a signal peptide. The propeptide at 17 to 110 (NENFVGHQVL…KQQMSAFQAR (94 aa)) is activation peptide. A Peptidase M14 domain is found at 121–414 (TYHTLDEIYE…LALLTIMDHT (294 aa)). Zn(2+) is bound by residues H179 and E182. Residues 179–182 (HSRE), R237, and 254–255 (NR) contribute to the substrate site. A disulfide bond links C248 and C271. H306 lines the Zn(2+) pocket. Residues 307–308 (SY) and Y358 each bind substrate. The active-site Proton donor/acceptor is the E380.

The protein belongs to the peptidase M14 family. Monomer. May form a complex with proelastase 2. Zn(2+) is required as a cofactor.

It localises to the secreted. The enzyme catalyses Release of a C-terminal amino acid, but little or no action with -Asp, -Glu, -Arg, -Lys or -Pro.. It catalyses the reaction leukotriene C4 + H2O = leukotriene F4 + glycine. Its function is as follows. Carboxypeptidase that catalyzes the release of a C-terminal amino acid, but has little or no action with -Asp, -Glu, -Arg, -Lys or -Pro. Catalyzes the conversion of leukotriene C4 to leukotriene F4 via the hydrolysis of an amide bond. This Rattus norvegicus (Rat) protein is Carboxypeptidase A1.